The chain runs to 265 residues: Type III pantothenate kinase (265 aa).

ATP is bound at residue 17-24; the sequence is DIGNTSIS. Residue 114–117 coordinates substrate; it reads GSDV. Catalysis depends on aspartate 116, which acts as the Proton acceptor. Aspartate 137 is a K(+) binding site. ATP is bound at residue threonine 140. Substrate is bound at residue threonine 192.

The protein belongs to the type III pantothenate kinase family. Homodimer. NH4(+) is required as a cofactor. It depends on K(+) as a cofactor.

The protein localises to the cytoplasm. It catalyses the reaction (R)-pantothenate + ATP = (R)-4'-phosphopantothenate + ADP + H(+). Its pathway is cofactor biosynthesis; coenzyme A biosynthesis; CoA from (R)-pantothenate: step 1/5. Its function is as follows. Catalyzes the phosphorylation of pantothenate (Pan), the first step in CoA biosynthesis. The chain is Type III pantothenate kinase from Borrelia hermsii (strain HS1 / DAH).